The following is a 359-amino-acid chain: tRNA/tmRNA (uracil-C(5))-methyltransferase (359 aa).

Residues Gln183, Tyr211, Asn216, Glu232, and Asp292 each coordinate S-adenosyl-L-methionine. The Nucleophile role is filled by Cys317. The active-site Proton acceptor is the Glu351.

The protein belongs to the class I-like SAM-binding methyltransferase superfamily. RNA M5U methyltransferase family. TrmA subfamily.

The catalysed reaction is uridine(54) in tRNA + S-adenosyl-L-methionine = 5-methyluridine(54) in tRNA + S-adenosyl-L-homocysteine + H(+). It catalyses the reaction uridine(341) in tmRNA + S-adenosyl-L-methionine = 5-methyluridine(341) in tmRNA + S-adenosyl-L-homocysteine + H(+). Its function is as follows. Dual-specificity methyltransferase that catalyzes the formation of 5-methyluridine at position 54 (m5U54) in all tRNAs, and that of position 341 (m5U341) in tmRNA (transfer-mRNA). The sequence is that of tRNA/tmRNA (uracil-C(5))-methyltransferase from Pseudomonas fluorescens (strain Pf0-1).